Consider the following 381-residue polypeptide: Mannitol-1-phosphate 5-dehydrogenase (381 aa).

3–14 (AVHFGAGNIGRG) is an NAD(+) binding site.

Belongs to the mannitol dehydrogenase family.

The enzyme catalyses D-mannitol 1-phosphate + NAD(+) = beta-D-fructose 6-phosphate + NADH + H(+). In Photobacterium profundum (strain SS9), this protein is Mannitol-1-phosphate 5-dehydrogenase.